The following is a 270-amino-acid chain: Carboxy-S-adenosyl-L-methionine synthase (270 aa).

S-adenosyl-L-methionine-binding positions include tyrosine 65, 90 to 92 (GCS), 143 to 144 (DI), asparagine 158, and arginine 225.

The protein belongs to the class I-like SAM-binding methyltransferase superfamily. Cx-SAM synthase family. In terms of assembly, homodimer.

It carries out the reaction prephenate + S-adenosyl-L-methionine = carboxy-S-adenosyl-L-methionine + 3-phenylpyruvate + H2O. Its function is as follows. Catalyzes the conversion of S-adenosyl-L-methionine (SAM) to carboxy-S-adenosyl-L-methionine (Cx-SAM). This is Carboxy-S-adenosyl-L-methionine synthase from Chromohalobacter salexigens (strain ATCC BAA-138 / DSM 3043 / CIP 106854 / NCIMB 13768 / 1H11).